The primary structure comprises 340 residues: MLTQLKAKSEGKLAKQICKVVLDHFEKQYSKELGDAWNTVREILTSPSCWQYAVLLNRFNYPFELEKDLHLKGYHTLSQGSLPNYPKSVKCYLSRTPGRIPSERHQIGNLKKYYLLNAASLLPVLALELRDGEKVLDLCAAPGGKSIALLQCACPGYLHCNEYDSLRLRWLRQTLESFIPQPLINVIKVSELDGRKMGDAQPEMFDKVLVDAPCSNDRSWLFSSDSQKASCRISQRRNLPLLQIELLRSAIKALRPGGILVYSTCTLSKAENQDVISEILNSHGNIMPMDIKGIARTCSHDFTFAPTGQECGLLVIPDKGKAWGPMYVAKLKKSWSTGKW.

S-adenosyl-L-methionine contacts are provided by residues 139–145, Glu-162, Asp-193, and Asp-211; that span reads CAAPGGK. The Nucleophile role is filled by Cys-265.

The protein belongs to the class I-like SAM-binding methyltransferase superfamily. RsmB/NOP family.

It localises to the mitochondrion matrix. It catalyses the reaction cytidine(34) in mitochondrial tRNA + S-adenosyl-L-methionine = 5-methylcytidine(34) in mitochondrial tRNA + S-adenosyl-L-homocysteine + H(+). In terms of biological role, mitochondrial tRNA methyltransferase that mediates methylation of cytosine to 5-methylcytosine (m5C) at position 34 of mt-tRNA(Met). mt-tRNA(Met) methylation at cytosine(34) takes place at the wobble position of the anticodon and initiates the formation of 5-formylcytosine (f(5)c) at this position. mt-tRNA(Met) containing the f(5)c modification at the wobble position enables recognition of the AUA codon in addition to the AUG codon, expanding codon recognition in mitochondrial translation. This is tRNA (cytosine(34)-C(5))-methyltransferase, mitochondrial from Homo sapiens (Human).